Here is a 127-residue protein sequence, read N- to C-terminus: Large ribosomal subunit protein uL22 (127 aa).

Residues 106 to 117 show a composition bias toward low complexity; that stretch reads GAPEGVPVGGAV. The tract at residues 106–127 is disordered; sequence GAPEGVPVGGAVDTPGDEEEEE.

This sequence belongs to the universal ribosomal protein uL22 family. Part of the 50S ribosomal subunit.

Functionally, this protein binds specifically to 23S rRNA; its binding is stimulated by other ribosomal proteins, e.g. L4, L17, and L20. It is important during the early stages of 50S assembly. It makes multiple contacts with different domains of the 23S rRNA in the assembled 50S subunit and ribosome. The globular domain of the protein is located near the polypeptide exit tunnel on the outside of the subunit, while an extended beta-hairpin is found that lines the wall of the exit tunnel in the center of the 70S ribosome. This chain is Large ribosomal subunit protein uL22, found in Rubrobacter xylanophilus (strain DSM 9941 / JCM 11954 / NBRC 16129 / PRD-1).